A 102-amino-acid polypeptide reads, in one-letter code: NADH-quinone oxidoreductase subunit K (102 aa).

3 consecutive transmembrane segments (helical) span residues 3-23 (IGLT…AFGI), 31-51 (IVLL…LVAF), and 66-86 (FILT…VVYF).

It belongs to the complex I subunit 4L family. In terms of assembly, NDH-1 is composed of 14 different subunits. Subunits NuoA, H, J, K, L, M, N constitute the membrane sector of the complex.

The protein resides in the cell inner membrane. It catalyses the reaction a quinone + NADH + 5 H(+)(in) = a quinol + NAD(+) + 4 H(+)(out). NDH-1 shuttles electrons from NADH, via FMN and iron-sulfur (Fe-S) centers, to quinones in the respiratory chain. The immediate electron acceptor for the enzyme in this species is believed to be ubiquinone. Couples the redox reaction to proton translocation (for every two electrons transferred, four hydrogen ions are translocated across the cytoplasmic membrane), and thus conserves the redox energy in a proton gradient. In Rhodospirillum centenum (strain ATCC 51521 / SW), this protein is NADH-quinone oxidoreductase subunit K.